The sequence spans 497 residues: Probable malate:quinone oxidoreductase (497 aa).

This sequence belongs to the MQO family. The cofactor is FAD.

It catalyses the reaction (S)-malate + a quinone = a quinol + oxaloacetate. The protein operates within carbohydrate metabolism; tricarboxylic acid cycle; oxaloacetate from (S)-malate (quinone route): step 1/1. This Exiguobacterium sibiricum (strain DSM 17290 / CCUG 55495 / CIP 109462 / JCM 13490 / 255-15) protein is Probable malate:quinone oxidoreductase.